The primary structure comprises 365 residues: Flagellar P-ring protein (365 aa).

A signal peptide spans 1 to 19; the sequence is MIKFLSALILLLVTTAAQA.

Belongs to the FlgI family. The basal body constitutes a major portion of the flagellar organelle and consists of four rings (L,P,S, and M) mounted on a central rod.

The protein resides in the periplasm. It localises to the bacterial flagellum basal body. Functionally, assembles around the rod to form the L-ring and probably protects the motor/basal body from shearing forces during rotation. The sequence is that of Flagellar P-ring protein from Shigella dysenteriae serotype 1 (strain Sd197).